An 856-amino-acid chain; its full sequence is Structure-specific endonuclease subunit SLX4 (856 aa).

The segment covering 1-19 (MDNAAIASQSNTPPSNGRS) has biased composition (polar residues). Disordered regions lie at residues 1–24 (MDNA…ARFV), 38–65 (VIEP…SHKI), 88–121 (VDSP…HKMA), 139–202 (KTRK…DNEL), 296–326 (GIQT…KKPQ), 362–392 (KKMG…GNGP), 621–640 (SKSS…SQGD), 668–689 (RLAK…NEGP), and 715–742 (DSVG…QDCD). The span at 51–60 (STLLTSLSKS) shows a compositional bias: low complexity. Positions 139 to 152 (KTRKKKAATAKRTR) are enriched in basic residues. The segment covering 296 to 309 (GIQTPTESRPATND) has biased composition (polar residues). Polar residues predominate over residues 673–686 (SVKSQEPKSFSLSN).

Belongs to the SLX4 family. In terms of assembly, forms a heterodimer with SLX1. Phosphorylated in response to DNA damage.

Its subcellular location is the nucleus. In terms of biological role, regulatory subunit of the SLX1-SLX4 structure-specific endonuclease that resolves DNA secondary structures generated during DNA repair and recombination. Has endonuclease activity towards branched DNA substrates, introducing single-strand cuts in duplex DNA close to junctions with ss-DNA. The sequence is that of Structure-specific endonuclease subunit SLX4 from Blastomyces gilchristii (strain SLH14081) (Blastomyces dermatitidis).